Here is a 196-residue protein sequence, read N- to C-terminus: Cupin-domain-containing oxidoreductase srdD (196 aa).

The cupin-like domain stretch occupies residues 99–165; sequence DFGPGVESPL…GNGTLPGRVM (67 aa).

It belongs to the virC family.

Functionally, highly reducing polyketide synthase; part of the gene cluster that mediates the biosynthesis of sordarial, a salicylic aldehyde structurally related to the phytotoxin pyriculol. The most interesting aspect of this pathway is formation of an aromatic product from the highly reducing polyketide synthase srdA. SrdA synthesizes a reduced polyketide chain from one molecule of acetyl-CoA and five molecules of malonyl-CoA. The polyketide chain is then reductively released as an aldehyde. The oxidoreductases srdC, srdD and srdE then oxidize one of the hydroxy groups to facilitate the intramolecular aldol condensation, followed by dehydration to yield a salicylic aldehyde. This aldehyde can undergo facile reduction by endogenous reductases to yield the alcohol 1-hydroxy-2-hydroxymethyl-3-pent-1,3-dienylbenzene. The flavin-dependent srdI counteract against the propensity of the aldehydes to be reduced under physiological conditions and is responsible for reoxidizing 1-hydroxy-2-hydroxymethyl-3-pent-1,3-dienylbenzene back to the salicylic aldehyde. This salicylic aldehyde is then selectively epoxidized by the cupin-domain-containing oxidoreductase srdB to yield the epoxide, which can be hydrolyzed stereoselectively by the hydrolase srdG to give the final product sordarial. In Neurospora crassa (strain ATCC 24698 / 74-OR23-1A / CBS 708.71 / DSM 1257 / FGSC 987), this protein is Cupin-domain-containing oxidoreductase srdD.